Consider the following 412-residue polypeptide: MAARNRRKNNKKKSLLVTSAAQEKNATYVLVAEELHKKTIDLNMGTETPLTENHENPIPAKEFKHQQKLEPIDEHDDGEDELSIKFKSMTKSSGPITEAEVQKLLLSYAFTSAAIQEDENEKESRHYPIKPPSPSASSLSAYFQSFVEKCKQVFYNFSLQTVEKLNALQNSLYEVFWIIFIYLNYWFPNVGDYVSNTFGQQDSIIIRISLSKSHFRALREKSSQKVQQAVKNIYFCFQEKPYLTAFKVSFAIGLVIPCSLLFLIMVSTATFFFFVYLTLFVVIGFFSSLFIIPLLGISFVFAIGVVSFGFCSNMSFKMAQLIYVRADAFLKKVLDKMALQTQPAQLQEPQEPLSTLRPVSNPTIPSPLRQTARPSKFVTEEDVIFEPVSAQSAIARSLETTANKAGNKFQLS.

Over 1-170 (MAARNRRKNN…TVEKLNALQN (170 aa)) the chain is Cytoplasmic. Residues 171–191 (SLYEVFWIIFIYLNYWFPNVG) traverse the membrane as a helical segment. Residues 192–247 (DYVSNTFGQQDSIIIRISLSKSHFRALREKSSQKVQQAVKNIYFCFQEKPYLTAFK) lie on the Lumenal side of the membrane. A helical membrane pass occupies residues 248–268 (VSFAIGLVIPCSLLFLIMVST). Over 269 to 271 (ATF) the chain is Cytoplasmic. The helical transmembrane segment at 272–292 (FFFVYLTLFVVIGFFSSLFII) threads the bilayer. Position 293 (Pro293) is a topological domain, lumenal. The helical transmembrane segment at 294-314 (LLGISFVFAIGVVSFGFCSNM) threads the bilayer. The Cytoplasmic portion of the chain corresponds to 315-412 (SFKMAQLIYV…NKAGNKFQLS (98 aa)). The disordered stretch occupies residues 347 to 374 (QEPQEPLSTLRPVSNPTIPSPLRQTARP). The span at 357–373 (RPVSNPTIPSPLRQTAR) shows a compositional bias: polar residues.

In terms of assembly, interacts specifically with the seipin complex FLD1-LDB16. Only a fraction appears to associate with the seipin core components, suggesting that it may be an ancillary subunit of the complex.

It localises to the endoplasmic reticulum membrane. The protein localises to the lipid droplet. Functionally, involved in lipid droplet (LD) organization. Modulates triglyceride (TAG) storage by reducing DGA1 LD localization. Promotes LD targeting of some proteins, including PDR16. This chain is Lipid droplet organization protein LDO45, found in Saccharomyces cerevisiae (strain ATCC 204508 / S288c) (Baker's yeast).